A 1399-amino-acid polypeptide reads, in one-letter code: DNA-directed RNA polymerase subunit beta' (1399 aa).

Zn(2+)-binding residues include Cys-71, Cys-73, Cys-86, and Cys-89. Mg(2+) is bound by residues Asp-462, Asp-464, and Asp-466. Zn(2+) contacts are provided by Cys-810, Cys-884, Cys-891, and Cys-894. The segment at 1379–1399 (KQAAIVPSQPEPQPLALPPAE) is disordered. Residues 1387–1399 (QPEPQPLALPPAE) show a composition bias toward pro residues.

Belongs to the RNA polymerase beta' chain family. The RNAP catalytic core consists of 2 alpha, 1 beta, 1 beta' and 1 omega subunit. When a sigma factor is associated with the core the holoenzyme is formed, which can initiate transcription. Requires Mg(2+) as cofactor. It depends on Zn(2+) as a cofactor.

It carries out the reaction RNA(n) + a ribonucleoside 5'-triphosphate = RNA(n+1) + diphosphate. Its function is as follows. DNA-dependent RNA polymerase catalyzes the transcription of DNA into RNA using the four ribonucleoside triphosphates as substrates. This is DNA-directed RNA polymerase subunit beta' from Bradyrhizobium sp. (strain BTAi1 / ATCC BAA-1182).